A 550-amino-acid polypeptide reads, in one-letter code: MLKNINPTQTQAWKALTAHFESAQDMDLKALFAQDSERFAKYSARFGQDILVDYSKNLVNAETMQHLFALAKETDLQSAITAMFKGEAINQTEDRAVLHTALRNRSNSPVLVNGEDVMPAVNAVLAKMKAFSERVIGGEWKGFTGKAITDVVNIGIGGSDLGPYMVTEALVPYKNHLTMHFVSNVDGTHMAETLKNVDPETTLFLVASKTFTTQETMTNAHTARDWFLKAAGDEAHVAKHFAALSTNGKAVAEFGIDTDNMFEFWDWVGGRYSLWSAIGLSIILSIGYDNFVELLAGAHEMDQHFVNTPFESNIPVILALIGIWYNNFHGAESEAILPYDQYLHRFAAYFQQGNMESNGKYVDRDGNPVTYQTGPIIWGEPGTNGQHAFYQLIHQGTKLIPCDFIAPAVSHNLVGDHHQKLMSNFFAQTEALAFGKSAQAVQAELEKAGKSAAEIAALVPFKVFEGNRPTNSILVKQITPRTLGNLIAMYEHKIFVQGVIWNIFSFDQWGVELGKQLANQILPELADSAAVTSHDSSTNGLINAFKAFRA.

The active-site Proton donor is the Glu-356. Active-site residues include His-387 and Lys-515.

Belongs to the GPI family.

The protein localises to the cytoplasm. The catalysed reaction is alpha-D-glucose 6-phosphate = beta-D-fructose 6-phosphate. It participates in carbohydrate biosynthesis; gluconeogenesis. It functions in the pathway carbohydrate degradation; glycolysis; D-glyceraldehyde 3-phosphate and glycerone phosphate from D-glucose: step 2/4. In terms of biological role, catalyzes the reversible isomerization of glucose-6-phosphate to fructose-6-phosphate. The protein is Glucose-6-phosphate isomerase of Vibrio cholerae serotype O1 (strain ATCC 39541 / Classical Ogawa 395 / O395).